The sequence spans 1015 residues: SPOC domain-containing protein 1 (1015 aa).

Disordered stretches follow at residues 73–97 (MVSPEDPTLSKEGLSAKGPPPSPVL), 118–159 (GFSL…EPGG), 213–320 (LYPE…PRLE), and 344–406 (AASS…MTPL). The span at 304–320 (SQDHAEGASKKDFPRLE) shows a compositional bias: basic and acidic residues. Over residues 373-382 (AHPTPCQSDP) the composition is skewed to polar residues. Residues 388 to 397 (AEPHQQRAED) are compositionally biased toward basic and acidic residues. Residues 410 to 530 (VRSTVVRAMQ…IIEQQQKELY (121 aa)) form the TFIIS central domain. Residues 643 to 685 (IQKAPGPAPASSPEVLKVGETPPKEPQDRLQMPAGLKNAPPSP) are disordered. An SPOC domain is found at 688–791 (WEGSLDMFSI…VQQVKMVLLP (104 aa)). Disordered stretches follow at residues 858-906 (PEDR…PGWG) and 967-1015 (QSQD…EHEC). Residues 967 to 978 (QSQDSLPPSTVV) are compositionally biased toward polar residues.

As to quaternary structure, interacts with DNMT3A, DNMT3C and DNMT3L. Interacts with C19orf84 homolog. Interacts with SPIN1; promoting recruitment to transposons marked with histone H3 trimethylated at both 'Lys-4' and 'Lys-9' (H3K4me3K9me3).

The protein localises to the nucleus. The protein resides in the chromosome. Its function is as follows. Protein adapter that acts as an essential executor of PIWIL4-piRNA pathway directed transposon DNA methylation and silencing in the male embryonic germ cells. Recruited to young transposons, which are specifically marked with histone H3 trimethylated at both 'Lys-4' and 'Lys-9' (H3K4me3K9me3), via its association with SPIN1 chromatin reader, and associates with the de novo DNA methylation machinery and repressive chromatin remodeling complexes. Following this, PIWIL4 engages with nascent transposable element transcript to direct piRNA-directed DNA methylation. Not required for piRNA biosynthesis. The sequence is that of SPOC domain-containing protein 1 from Mus musculus (Mouse).